The following is a 156-amino-acid chain: MKTNDKTKKIVLTAGTFDLLHPGHHNTLKYAKSLGDELIVVIARDETVKKIKGRKPVIPENQRREMIEAIKPVDKAILGSLTDKLEPILKIKPDIIVLGPDQITFDAENLKNELKKLGLDVEIVKTKEYTNCDFHSSYDIIKEIVKRWCNKKIIKK.

Residues Thr-16–Phe-17, His-21–His-24, Asp-101, and Tyr-129 contribute to the ATP site.

The protein belongs to the archaeal FAD synthase family. Homodimer. A divalent metal cation serves as cofactor.

The catalysed reaction is FMN + ATP + H(+) = FAD + diphosphate. The protein operates within cofactor biosynthesis; FAD biosynthesis; FAD from FMN: step 1/1. Functionally, catalyzes the transfer of the AMP portion of ATP to flavin mononucleotide (FMN) to produce flavin adenine dinucleotide (FAD) coenzyme. This is FAD synthase from Methanococcus aeolicus (strain ATCC BAA-1280 / DSM 17508 / OCM 812 / Nankai-3).